The following is a 45-amino-acid chain: MSQAPMATTPRNYPIFTVRWLALHTLGIPTVFFLGALAAMQFIRR.

A helical transmembrane segment spans residues 20-36; that stretch reads WLALHTLGIPTVFFLGA. His24 serves as a coordination point for heme.

The protein belongs to the PsbE/PsbF family. Heterodimer of an alpha subunit and a beta subunit. PSII is composed of 1 copy each of membrane proteins PsbA, PsbB, PsbC, PsbD, PsbE, PsbF, PsbH, PsbI, PsbJ, PsbK, PsbL, PsbM, PsbT, PsbX, PsbY, PsbZ, Psb30/Ycf12, peripheral proteins PsbO, CyanoQ (PsbQ), PsbU, PsbV and a large number of cofactors. It forms dimeric complexes. Heme b serves as cofactor.

It is found in the cellular thylakoid membrane. This b-type cytochrome is tightly associated with the reaction center of photosystem II (PSII). PSII is a light-driven water:plastoquinone oxidoreductase that uses light energy to abstract electrons from H(2)O, generating O(2) and a proton gradient subsequently used for ATP formation. It consists of a core antenna complex that captures photons, and an electron transfer chain that converts photonic excitation into a charge separation. This chain is Cytochrome b559 subunit beta, found in Synechococcus sp. (strain CC9902).